The sequence spans 224 residues: LexA repressor (224 aa).

The H-T-H motif DNA-binding region spans 38-58 (IREIGDAVGLTSTSSVAHQLR). The segment covering 71 to 82 (NRPRAVDVRGID) has biased composition (basic and acidic residues). Residues 71–96 (NRPRAVDVRGIDDAGTPSATTDVIGS) are disordered. Residues S148 and K185 each act as for autocatalytic cleavage activity in the active site.

Belongs to the peptidase S24 family. As to quaternary structure, homodimer.

It carries out the reaction Hydrolysis of Ala-|-Gly bond in repressor LexA.. Functionally, represses a number of genes involved in the response to DNA damage (SOS response), including recA and lexA. In the presence of single-stranded DNA, RecA interacts with LexA causing an autocatalytic cleavage which disrupts the DNA-binding part of LexA, leading to derepression of the SOS regulon and eventually DNA repair. This Mycobacteroides abscessus (strain ATCC 19977 / DSM 44196 / CCUG 20993 / CIP 104536 / JCM 13569 / NCTC 13031 / TMC 1543 / L948) (Mycobacterium abscessus) protein is LexA repressor.